A 313-amino-acid polypeptide reads, in one-letter code: Porphobilinogen deaminase (313 aa).

Position 242 is an S-(dipyrrolylmethanemethyl)cysteine (Cys242).

Belongs to the HMBS family. Monomer. Dipyrromethane is required as a cofactor.

It carries out the reaction 4 porphobilinogen + H2O = hydroxymethylbilane + 4 NH4(+). It functions in the pathway porphyrin-containing compound metabolism; protoporphyrin-IX biosynthesis; coproporphyrinogen-III from 5-aminolevulinate: step 2/4. Functionally, tetrapolymerization of the monopyrrole PBG into the hydroxymethylbilane pre-uroporphyrinogen in several discrete steps. This is Porphobilinogen deaminase from Escherichia coli (strain K12 / MC4100 / BW2952).